Here is a 651-residue protein sequence, read N- to C-terminus: Apical membrane antigen 1-like protein (651 aa).

The N-terminal stretch at 1–41 (MPTESRSILARAEETRCRHLSRLLRAGLVFLLCDVLTSCLA) is a signal peptide. A propeptide spans 42–81 (TPELQNTVIRSSKAHHLQLLFSSRSTPAVKFPLDATLSAP) (removed in mature form). The Extracellular portion of the chain corresponds to 42-570 (TPELQNTVIR…VEKEGSGGNT (529 aa)). 7 disulfide bridges follow: C141–C309, C215–C248, C264–C277, C327–C417, C347–C408, C441–C463, and C453–C475. A glycan (N-linked (GlcNAc...) asparagine) is linked at N230. The stretch at 483-486 (PPVK) is one 1; approximate repeat. A 12 x 4 AA approximate tandem-repeats of P-P-V-E region spans residues 483–531 (PPVKPPVEPPVEPPVEPPVEPPVEPPVEPPVEPPVEPPVEPPVVEPPTE). Over residues 483 to 547 (PPVKPPVEPP…EPPVVLPPTP (65 aa)) the composition is skewed to pro residues. The tract at residues 483-567 (PPVKPPVEPP…DETVEKEGSG (85 aa)) is disordered. 9 tandem repeats follow at residues 487-490 (PPVE), 491-494 (PPVE), 495-498 (PPVE), 499-502 (PPVE), 503-506 (PPVE), 507-510 (PPVE), 511-514 (PPVE), 515-518 (PPVE), and 519-522 (PPVE). Residues 523 to 527 (PPVVE) form an 11; approximate repeat. The 12; approximate repeat unit spans residues 528 to 531 (PPTE). The chain crosses the membrane as a helical span at residues 571-591 (ALIAGSVLGMLIILALVGTCV). Topologically, residues 592-651 (GFYYRKRPLPPTERPTVEASGGREVEGPSDVAVPPDHSWWGEGEHETESLLGSRAVDAEF) are cytoplasmic. Residues 598–651 (RPLPPTERPTVEASGGREVEGPSDVAVPPDHSWWGEGEHETESLLGSRAVDAEF) form a disordered region.

The protein belongs to the apicomplexan parasites AMA1 family. Proteolytically cleaved within its transmembrane domain, releasing a soluble form from the cell surface.

It localises to the cell membrane. The protein resides in the secreted. Its function is as follows. May play a role in host cell invasion. The sequence is that of Apical membrane antigen 1-like protein from Toxoplasma gondii (strain ATCC 50861 / VEG).